Reading from the N-terminus, the 106-residue chain is UPF0122 protein Exig_1902 (106 aa).

Belongs to the UPF0122 family.

In terms of biological role, might take part in the signal recognition particle (SRP) pathway. This is inferred from the conservation of its genetic proximity to ftsY/ffh. May be a regulatory protein. In Exiguobacterium sibiricum (strain DSM 17290 / CCUG 55495 / CIP 109462 / JCM 13490 / 255-15), this protein is UPF0122 protein Exig_1902.